The sequence spans 282 residues: Probable endonuclease 4 (282 aa).

Positions 67, 107, 144, 178, 181, 215, 228, 230, and 260 each coordinate Zn(2+).

The protein belongs to the AP endonuclease 2 family. Zn(2+) is required as a cofactor.

It catalyses the reaction Endonucleolytic cleavage to 5'-phosphooligonucleotide end-products.. Endonuclease IV plays a role in DNA repair. It cleaves phosphodiester bonds at apurinic or apyrimidinic (AP) sites, generating a 3'-hydroxyl group and a 5'-terminal sugar phosphate. In Methanoculleus marisnigri (strain ATCC 35101 / DSM 1498 / JR1), this protein is Probable endonuclease 4.